Reading from the N-terminus, the 217-residue chain is UPF0323 lipoprotein HPSH_01205 (217 aa).

The N-terminal stretch at methionine 1–glycine 27 is a signal peptide. Cysteine 28 carries the N-palmitoyl cysteine lipid modification. A lipid anchor (S-diacylglycerol cysteine) is attached at cysteine 28. Residues glutamine 160–arginine 171 show a composition bias toward polar residues. The tract at residues glutamine 160 to serine 217 is disordered. Residues serine 172–serine 210 show a composition bias toward low complexity.

The protein belongs to the UPF0323 family.

The protein resides in the cell membrane. The chain is UPF0323 lipoprotein HPSH_01205 from Helicobacter pylori (strain Shi470).